Here is a 290-residue protein sequence, read N- to C-terminus: Small ribosomal subunit biogenesis GTPase RsgA (290 aa).

Residues 61 to 218 enclose the CP-type G domain; sequence KSELVRPTVA…IVDTPGFSTL (158 aa). GTP contacts are provided by residues 110–113 and 161–169; these read NKID and GPSGAGKST. Residues Cys243, Cys248, His250, and Cys256 each coordinate Zn(2+).

The protein belongs to the TRAFAC class YlqF/YawG GTPase family. RsgA subfamily. Monomer. Associates with 30S ribosomal subunit, binds 16S rRNA. The cofactor is Zn(2+).

The protein resides in the cytoplasm. One of several proteins that assist in the late maturation steps of the functional core of the 30S ribosomal subunit. Helps release RbfA from mature subunits. May play a role in the assembly of ribosomal proteins into the subunit. Circularly permuted GTPase that catalyzes slow GTP hydrolysis, GTPase activity is stimulated by the 30S ribosomal subunit. The sequence is that of Small ribosomal subunit biogenesis GTPase RsgA from Clostridium beijerinckii (strain ATCC 51743 / NCIMB 8052) (Clostridium acetobutylicum).